The sequence spans 40 residues: Photosystem II reaction center protein J (40 aa).

Residues isoleucine 8–phenylalanine 28 form a helical membrane-spanning segment.

Belongs to the PsbJ family. PSII is composed of 1 copy each of membrane proteins PsbA, PsbB, PsbC, PsbD, PsbE, PsbF, PsbH, PsbI, PsbJ, PsbK, PsbL, PsbM, PsbT, PsbX, PsbY, PsbZ, Psb30/Ycf12, at least 3 peripheral proteins of the oxygen-evolving complex and a large number of cofactors. It forms dimeric complexes.

Its subcellular location is the plastid. The protein resides in the chloroplast thylakoid membrane. Functionally, one of the components of the core complex of photosystem II (PSII). PSII is a light-driven water:plastoquinone oxidoreductase that uses light energy to abstract electrons from H(2)O, generating O(2) and a proton gradient subsequently used for ATP formation. It consists of a core antenna complex that captures photons, and an electron transfer chain that converts photonic excitation into a charge separation. The protein is Photosystem II reaction center protein J of Vitis vinifera (Grape).